The primary structure comprises 229 residues: Large ribosomal subunit protein uL1 (229 aa).

This sequence belongs to the universal ribosomal protein uL1 family. In terms of assembly, part of the 50S ribosomal subunit.

Its function is as follows. Binds directly to 23S rRNA. The L1 stalk is quite mobile in the ribosome, and is involved in E site tRNA release. Protein L1 is also a translational repressor protein, it controls the translation of the L11 operon by binding to its mRNA. In Haemophilus influenzae (strain PittEE), this protein is Large ribosomal subunit protein uL1.